Reading from the N-terminus, the 441-residue chain is Interferon-related developmental regulator 2 (441 aa).

Residues 1 to 15 (MPRARKGNALRKGGQ) are compositionally biased toward basic residues. Positions 1 to 51 (MPRARKGNALRKGGQRRGGGARSSTQADSGSSEDEAASEARSTTSDCPSLL) are disordered.

Belongs to the IFRD family. Associates with ribosomes; promoting ribosome inactivation.

In terms of biological role, ribosome-binding protein that acts as an inhibitor of mRNA translation by promoting ribosome inactivation. Associates with the P- and E-sites of the ribosome and inserts a C-terminal helix into the mRNA exit channel to preclude translation. The polypeptide is Interferon-related developmental regulator 2 (Mus musculus (Mouse)).